Here is a 379-residue protein sequence, read N- to C-terminus: RIB43A-like with coiled-coils protein 1 (379 aa).

The interval 1-21 is disordered; that stretch reads MYNIKQSTDTKEAAAIEARRN. The segment covering 8–21 has biased composition (basic and acidic residues); it reads TDTKEAAAIEARRN. 2 coiled-coil regions span residues 82–111 and 216–304; these read KEEA…GREF and NANK…QAEK.

Belongs to the RIB43A family. Microtubule inner protein component of sperm flagellar doublet microtubules.

It is found in the cytoplasm. The protein localises to the cytoskeleton. It localises to the flagellum axoneme. This Homo sapiens (Human) protein is RIB43A-like with coiled-coils protein 1 (RIBC1).